A 133-amino-acid chain; its full sequence is ATP synthase epsilon chain, chloroplastic (133 aa).

It belongs to the ATPase epsilon chain family. F-type ATPases have 2 components, CF(1) - the catalytic core - and CF(0) - the membrane proton channel. CF(1) has five subunits: alpha(3), beta(3), gamma(1), delta(1), epsilon(1). CF(0) has three main subunits: a, b and c.

It is found in the plastid. Its subcellular location is the chloroplast thylakoid membrane. In terms of biological role, produces ATP from ADP in the presence of a proton gradient across the membrane. The chain is ATP synthase epsilon chain, chloroplastic from Psilotum nudum (Whisk fern).